A 454-amino-acid polypeptide reads, in one-letter code: B-cell lymphoma 3 protein (454 aa).

The tract at residues 1-50 (MPRCPAGAMDEGPVDLRTRPKAAGLPGAALPLRKRPLRAPSPEPAAPRGA) is disordered. A compositionally biased stretch (low complexity) spans 21 to 31 (KAAGLPGAALP). Residue S41 is modified to Phosphoserine. ANK repeat units follow at residues 134–163 (DGDT…QGGR), 171–200 (LRQT…SPMA), 204–235 (HGQT…TLDL), 241–270 (DGLT…DIDA), 275–304 (SGRS…NVNA), 308–337 (SGSS…DSSL), and 338–367 (KNCH…RPAS). Positions 360-454 (GKATRPASTS…VPPSPAPGGS (95 aa)) are disordered. Residues 365 to 381 (PASTSQPDPSPDRSANT) show a composition bias toward polar residues. S374 is subject to Phosphoserine. Positions 382–404 (SPESSSRLSSNGLLSASPSSSPS) are enriched in low complexity. S402 and S406 each carry phosphoserine; by GSK3. The span at 405–418 (QSPPRDPPGFPMAP) shows a compositional bias: pro residues. The segment covering 432–442 (LPFAGVLRGPG) has biased composition (low complexity). Residues 443–454 (RPVPPSPAPGGS) are compositionally biased toward pro residues.

In terms of assembly, component of a complex consisting of the NF-kappa-B p52-p52 homodimer and BCL3. Component of a complex consisting of the NF-kappa-B p50-p50 homodimer and BCL3. Interacts with N4BP2, COPS5 and PIR. Interacts with CYLD. In terms of processing, polyubiquitinated. Ubiquitination via 'Lys-63'-linked ubiquitin chains is required for nuclear accumulation. Deubiquitinated by CYLD, which acts on 'Lys-63'-linked ubiquitin chains. Deubiquitination by CYLD prevents nuclear accumulation. Post-translationally, activated by phosphorylation.

The protein localises to the nucleus. Its subcellular location is the cytoplasm. It localises to the perinuclear region. Functionally, contributes to the regulation of transcriptional activation of NF-kappa-B target genes. In the cytoplasm, inhibits the nuclear translocation of the NF-kappa-B p50 subunit. In the nucleus, acts as transcriptional activator that promotes transcription of NF-kappa-B target genes. Contributes to the regulation of cell proliferation. The polypeptide is B-cell lymphoma 3 protein (BCL3) (Homo sapiens (Human)).